The sequence spans 312 residues: Olfactory receptor 6N1 (312 aa).

Topologically, residues 1-25 (MDTGNWSQVAEFIILGFPHLQGVQI) are extracellular. N5 is a glycosylation site (N-linked (GlcNAc...) asparagine). The chain crosses the membrane as a helical span at residues 26–46 (YLFLLLLLIYLMTVLGNLLIF). The Cytoplasmic portion of the chain corresponds to 47–54 (LVVCLDSR). The helical transmembrane segment at 55 to 75 (LHTPMYHFVSILSFSELGYTA) threads the bilayer. Residues 76–99 (ATIPKMLANLLSEKKTISFSGCLL) are Extracellular-facing. A disulfide bond links C97 and C189. The helical transmembrane segment at 100–120 (QIYFFHSLGATECYLLTAMAY) threads the bilayer. Residues 121 to 139 (DRYLAICRPLHYPTLMTPT) lie on the Cytoplasmic side of the membrane. Residues 140-160 (LCAEIAIGCWLGGLAGPVVEI) form a helical membrane-spanning segment. Topologically, residues 161-197 (SLISRLPFCGPNRIQHVFCDFPPVLSLACTDTSINVL) are extracellular. Residues 198-217 (VDFVINSCKILATFLLILCS) form a helical membrane-spanning segment. Over 218-237 (YVQIICTVLRIPSAAGKRKA) the chain is Cytoplasmic. A helical transmembrane segment spans residues 238–258 (ISTCASHFTVVLIFYGSILSM). Residues 259–271 (YVQLKKSYSLDYD) are Extracellular-facing. A helical membrane pass occupies residues 272 to 292 (QALAVVYSVLTPFLNPFIYSL). The Cytoplasmic portion of the chain corresponds to 293-312 (RNKEIKEAVRRQLKRIGILA).

Belongs to the G-protein coupled receptor 1 family.

It is found in the cell membrane. In terms of biological role, odorant receptor. The sequence is that of Olfactory receptor 6N1 (OR6N1) from Homo sapiens (Human).